Reading from the N-terminus, the 397-residue chain is MKYAILIGDGMADYPIEKLGNRTILQAARTPAMDSIAARGRAGLAKTVPDSFPPGSDVANMSILGYDPATYYSGRAPLEAASMGVALAADDVAFRCNLITTEHGMIKDYSAGHISSDEAEILIDTLDYELSTENIRFYPGISYRHLIVAGNNLGAETECTPPHDITGEKIDKYLPRGKDGEFFSELIEASKVVLELHPVNLKRVEEGKNPANSIWVWGQGYAPKFTAFMKLYGKKGAVISAVDLLKGIGIYAGLDVIEVHGATGYLDTNYEGKVRAAIEALKTRDLVFVHVEAPDEAGHEGSIEKKLKAVEDFDSRIVAPILEYAENSDEPFTILVLPDHPTPISVKTHTRDPIPFAIYRTDKPETDNVEAFDEESVKNGSMGLVKASDLIGILIKS.

It belongs to the BPG-independent phosphoglycerate mutase family. A-PGAM subfamily.

It carries out the reaction (2R)-2-phosphoglycerate = (2R)-3-phosphoglycerate. The protein operates within carbohydrate degradation; glycolysis; pyruvate from D-glyceraldehyde 3-phosphate: step 3/5. Catalyzes the interconversion of 2-phosphoglycerate and 3-phosphoglycerate. This chain is 2,3-bisphosphoglycerate-independent phosphoglycerate mutase (apgM), found in Methanosarcina mazei (strain ATCC BAA-159 / DSM 3647 / Goe1 / Go1 / JCM 11833 / OCM 88) (Methanosarcina frisia).